The primary structure comprises 341 residues: HTH-type transcriptional repressor PurR (341 aa).

In terms of domain architecture, HTH lacI-type spans 2–56; sequence ATIKDVAKRANVSTTTVSHVINKTRFVAEETRNAVWAAIKELHYSPSAVARSLKV. Residues 4–23 constitute a DNA-binding region (H-T-H motif); it reads IKDVAKRANVSTTTVSHVIN. A DNA-binding region spans residues 48–56; sequence SAVARSLKV. 5 residues coordinate hypoxanthine: Tyr-73, Arg-190, Thr-192, Phe-221, and Asp-275.

As to quaternary structure, homodimer.

It functions in the pathway purine metabolism; purine nucleotide biosynthesis [regulation]. Its function is as follows. Is the main repressor of the genes involved in the de novo synthesis of purine nucleotides, regulating purB, purC, purEK, purF, purHD, purL, purMN and guaBA expression. In addition, it participates in the regulation or coregulation of genes involved in de novo pyrimidine nucleotide biosynthesis, salvage and uptake (pyrC, pyrD, carAB and codBA), and of several genes encoding enzymes necessary for nucleotide and polyamine biosynthesis (prsA, glyA, gcvTHP, speA, glnB). Binds to a 16-bp palindromic sequence located within the promoter region of pur regulon genes. The consensus binding sequence is 5'-ACGCAAACGTTTTCNT-3'. PurR is allosterically activated to bind its cognate DNA by binding the purine corepressors, hypoxanthine or guanine, thereby effecting transcription repression. In Escherichia coli (strain K12), this protein is HTH-type transcriptional repressor PurR (purR).